Here is a 408-residue protein sequence, read N- to C-terminus: Arginine biosynthesis bifunctional protein ArgJ (408 aa).

The substrate site is built by Thr156, Lys182, Thr193, Glu279, Asn403, and Ser408. The Nucleophile role is filled by Thr193.

This sequence belongs to the ArgJ family. In terms of assembly, heterotetramer of two alpha and two beta chains.

Its subcellular location is the cytoplasm. The enzyme catalyses N(2)-acetyl-L-ornithine + L-glutamate = N-acetyl-L-glutamate + L-ornithine. It carries out the reaction L-glutamate + acetyl-CoA = N-acetyl-L-glutamate + CoA + H(+). Its pathway is amino-acid biosynthesis; L-arginine biosynthesis; L-ornithine and N-acetyl-L-glutamate from L-glutamate and N(2)-acetyl-L-ornithine (cyclic): step 1/1. It participates in amino-acid biosynthesis; L-arginine biosynthesis; N(2)-acetyl-L-ornithine from L-glutamate: step 1/4. Its function is as follows. Catalyzes two activities which are involved in the cyclic version of arginine biosynthesis: the synthesis of N-acetylglutamate from glutamate and acetyl-CoA as the acetyl donor, and of ornithine by transacetylation between N(2)-acetylornithine and glutamate. This Bordetella pertussis (strain Tohama I / ATCC BAA-589 / NCTC 13251) protein is Arginine biosynthesis bifunctional protein ArgJ.